Reading from the N-terminus, the 351-residue chain is Prostaglandin reductase 2 (351 aa).

F99–Y100 provides a ligand contact to substrate. Residues G165–G168, K192, Y208, N231, C253–Y259, F287–V289, and N337 contribute to the NADP(+) site. L288–L290 is a binding site for substrate.

It belongs to the NADP-dependent oxidoreductase L4BD family. Monomer.

Its subcellular location is the cytoplasm. The catalysed reaction is 13,14-dihydro-15-oxo-prostaglandin E2 + NAD(+) = 15-oxoprostaglandin E2 + NADH + H(+). It carries out the reaction 13,14-dihydro-15-oxo-prostaglandin E2 + NADP(+) = 15-oxoprostaglandin E2 + NADPH + H(+). It catalyses the reaction 13,14-dihydro-15-oxo-PGF2alpha + NADP(+) = 15-oxoprostaglandin F2alpha + NADPH + H(+). The enzyme catalyses 13,14-dihydro-15-oxo-prostaglandin E1 + NADP(+) = 15-oxoprostaglandin E1 + NADPH + H(+). The catalysed reaction is 13,14-dihydro-15-oxo-prostaglandin F1alpha + NADP(+) = 15-oxoprostaglandin F1alpha + NADPH + H(+). Its function is as follows. Functions as 15-oxo-prostaglandin 13-reductase and acts on 15-keto-PGE1, 15-keto-PGE2, 15-keto-PGE1-alpha and 15-keto-PGE2-alpha with highest activity towards 15-keto-PGE2. Overexpression represses transcriptional activity of PPARG and inhibits adipocyte differentiation. The chain is Prostaglandin reductase 2 (PTGR2) from Pongo abelii (Sumatran orangutan).